The primary structure comprises 443 residues: Phosphoglucosamine mutase (443 aa).

Ser100 (phosphoserine intermediate) is an active-site residue. Mg(2+) contacts are provided by Ser100, Asp239, Asp241, and Asp243. At Ser100 the chain carries Phosphoserine.

Belongs to the phosphohexose mutase family. It depends on Mg(2+) as a cofactor. Activated by phosphorylation.

It catalyses the reaction alpha-D-glucosamine 1-phosphate = D-glucosamine 6-phosphate. Functionally, catalyzes the conversion of glucosamine-6-phosphate to glucosamine-1-phosphate. This Shewanella sediminis (strain HAW-EB3) protein is Phosphoglucosamine mutase.